Consider the following 131-residue polypeptide: Small ribosomal subunit protein uS9 (131 aa).

A disordered region spans residues alanine 102–arginine 131. The span at lysine 112 to arginine 131 shows a compositional bias: basic residues.

It belongs to the universal ribosomal protein uS9 family.

This chain is Small ribosomal subunit protein uS9, found in Desulfitobacterium hafniense (strain DSM 10664 / DCB-2).